We begin with the raw amino-acid sequence, 73 residues long: Putative membrane protein insertion efficiency factor (73 aa).

The protein belongs to the UPF0161 family.

Its subcellular location is the cell inner membrane. Its function is as follows. Could be involved in insertion of integral membrane proteins into the membrane. In Phocaeicola vulgatus (strain ATCC 8482 / DSM 1447 / JCM 5826 / CCUG 4940 / NBRC 14291 / NCTC 11154) (Bacteroides vulgatus), this protein is Putative membrane protein insertion efficiency factor.